Here is a 226-residue protein sequence, read N- to C-terminus: Glutathione peroxidase 3 (226 aa).

A signal peptide spans 1–24 (MARLLQASCLLSLLLAGFVPQSRG). The active site involves selenocysteine 73. A non-standard amino acid (selenocysteine) is located at residue selenocysteine 73.

It belongs to the glutathione peroxidase family. As to quaternary structure, homotetramer. In terms of tissue distribution, secreted in plasma.

It is found in the secreted. It carries out the reaction 2 glutathione + H2O2 = glutathione disulfide + 2 H2O. It catalyses the reaction tert-butyl hydroperoxide + 2 glutathione = tert-butanol + glutathione disulfide + H2O. Its function is as follows. Protects cells and enzymes from oxidative damage, by catalyzing the reduction of hydrogen peroxide, lipid peroxides and organic hydroperoxide, by glutathione. This chain is Glutathione peroxidase 3, found in Hylobates lar (Lar gibbon).